Consider the following 104-residue polypeptide: Disrupted in renal carcinoma protein 1 (104 aa).

The segment at 1-23 (MPEAHMQPAKLQTSLPTTDHGSK) is disordered. Positions 10 to 19 (KLQTSLPTTD) are enriched in polar residues.

As to expression, expressed at low steady-state level in adult placenta, testis, ovary, prostate, fetal kidney, spleen and skeletal muscle.

The polypeptide is Disrupted in renal carcinoma protein 1 (DIRC1) (Homo sapiens (Human)).